A 77-amino-acid polypeptide reads, in one-letter code: Sec-independent protein translocase protein TatA (77 aa).

The helical transmembrane segment at 2–22 (GFGGISIWQLLIILLIVVMLF) threads the bilayer. Composition is skewed to basic and acidic residues over residues 46-59 (DNGEAEKPAVEEPK) and 66-77 (QARKVEEPAKKD). The interval 46–77 (DNGEAEKPAVEEPKGQTIDAQARKVEEPAKKD) is disordered.

Belongs to the TatA/E family. In terms of assembly, the Tat system comprises two distinct complexes: a TatABC complex, containing multiple copies of TatA, TatB and TatC subunits, and a separate TatA complex, containing only TatA subunits. Substrates initially bind to the TatABC complex, which probably triggers association of the separate TatA complex to form the active translocon.

It localises to the cell inner membrane. Its function is as follows. Part of the twin-arginine translocation (Tat) system that transports large folded proteins containing a characteristic twin-arginine motif in their signal peptide across membranes. TatA could form the protein-conducting channel of the Tat system. This Ectopseudomonas mendocina (strain ymp) (Pseudomonas mendocina) protein is Sec-independent protein translocase protein TatA.